The chain runs to 545 residues: Ribulokinase (545 aa).

The protein belongs to the ribulokinase family.

The catalysed reaction is D-ribulose + ATP = D-ribulose 5-phosphate + ADP + H(+). The enzyme catalyses L-ribulose + ATP = L-ribulose 5-phosphate + ADP + H(+). Its pathway is carbohydrate degradation; L-arabinose degradation via L-ribulose; D-xylulose 5-phosphate from L-arabinose (bacterial route): step 2/3. The sequence is that of Ribulokinase from Staphylococcus aureus (strain bovine RF122 / ET3-1).